The primary structure comprises 453 residues: Protein FAM222A (453 aa).

This sequence belongs to the FAM222 family.

The chain is Protein FAM222A (Fam222a) from Mus musculus (Mouse).